A 251-amino-acid polypeptide reads, in one-letter code: Adenosine 5'-phosphosulfate reductase (251 aa).

[4Fe-4S] cluster is bound by residues C121, C122, C204, and C207. C232 acts as the Nucleophile; cysteine thiosulfonate intermediate in catalysis.

This sequence belongs to the PAPS reductase family. CysH subfamily. The cofactor is [4Fe-4S] cluster.

The protein resides in the cytoplasm. It carries out the reaction [thioredoxin]-disulfide + sulfite + AMP + 2 H(+) = adenosine 5'-phosphosulfate + [thioredoxin]-dithiol. The protein operates within sulfur metabolism; hydrogen sulfide biosynthesis; sulfite from sulfate. Catalyzes the formation of sulfite from adenosine 5'-phosphosulfate (APS) using thioredoxin as an electron donor. The protein is Adenosine 5'-phosphosulfate reductase of Sinorhizobium fredii (strain NBRC 101917 / NGR234).